The primary structure comprises 178 residues: Peptidyl-prolyl cis-trans isomerase H (178 aa).

The PPIase cyclophilin-type domain maps to 14–177; the sequence is FFDISIGDVP…LPVKITECGQ (164 aa).

It belongs to the cyclophilin-type PPIase family. PPIase H subfamily.

It is found in the nucleus. It carries out the reaction [protein]-peptidylproline (omega=180) = [protein]-peptidylproline (omega=0). PPIases accelerate the folding of proteins. It catalyzes the cis-trans isomerization of proline imidic peptide bonds in oligopeptides. In Rhizopus delemar (strain RA 99-880 / ATCC MYA-4621 / FGSC 9543 / NRRL 43880) (Mucormycosis agent), this protein is Peptidyl-prolyl cis-trans isomerase H (cyp7).